The chain runs to 326 residues: Ornithine carbamoyltransferase (326 aa).

Residues 54-57, Gln81, Arg105, and 132-135 contribute to the carbamoyl phosphate site; these read STRT and HPTQ. Residues Asn164, Asp225, and 229 to 230 contribute to the L-ornithine site; that span reads SM. Residues 266-267 and Arg311 contribute to the carbamoyl phosphate site; that span reads CL.

The protein belongs to the aspartate/ornithine carbamoyltransferase superfamily. OTCase family.

The protein localises to the cytoplasm. It catalyses the reaction carbamoyl phosphate + L-ornithine = L-citrulline + phosphate + H(+). Its pathway is amino-acid biosynthesis; L-arginine biosynthesis; L-arginine from L-ornithine and carbamoyl phosphate: step 1/3. In terms of biological role, reversibly catalyzes the transfer of the carbamoyl group from carbamoyl phosphate (CP) to the N(epsilon) atom of ornithine (ORN) to produce L-citrulline. The sequence is that of Ornithine carbamoyltransferase (argF) from Streptococcus mutans serotype c (strain ATCC 700610 / UA159).